A 373-amino-acid polypeptide reads, in one-letter code: uncharacterized protein (373 aa).

The helical transmembrane segment at 180-202 threads the bilayer; that stretch reads YYVVALGTLALGSILGYTAKYVW.

It localises to the membrane. This is an uncharacterized protein from Rickettsia prowazekii (strain Madrid E).